The following is a 203-amino-acid chain: Small ribosomal subunit protein uS4c (203 aa).

One can recognise an S4 RNA-binding domain in the interval 89-152; the sequence is MRLDNILFRL…QSRTLIQNSL (64 aa).

It belongs to the universal ribosomal protein uS4 family. As to quaternary structure, part of the 30S ribosomal subunit. Contacts protein S5. The interaction surface between S4 and S5 is involved in control of translational fidelity.

The protein resides in the plastid. In terms of biological role, one of the primary rRNA binding proteins, it binds directly to 16S rRNA where it nucleates assembly of the body of the 30S subunit. Functionally, with S5 and S12 plays an important role in translational accuracy. This Orobanche minor (Small broomrape) protein is Small ribosomal subunit protein uS4c (rps4).